Here is a 204-residue protein sequence, read N- to C-terminus: Ribosomal RNA small subunit methyltransferase G (204 aa).

Residues Gly69, Phe74, 123–124 (IE), and Arg137 each bind S-adenosyl-L-methionine.

It belongs to the methyltransferase superfamily. RNA methyltransferase RsmG family.

It localises to the cytoplasm. It carries out the reaction guanosine(527) in 16S rRNA + S-adenosyl-L-methionine = N(7)-methylguanosine(527) in 16S rRNA + S-adenosyl-L-homocysteine. Functionally, specifically methylates the N7 position of guanine in position 527 of 16S rRNA. This Ruegeria pomeroyi (strain ATCC 700808 / DSM 15171 / DSS-3) (Silicibacter pomeroyi) protein is Ribosomal RNA small subunit methyltransferase G.